A 375-amino-acid chain; its full sequence is uncharacterized protein (375 aa).

This sequence belongs to the IMPDH/GMPR family.

This is an uncharacterized protein from Mycobacterium leprae (strain TN).